A 1260-amino-acid chain; its full sequence is Neural cell adhesion molecule L1 (1260 aa).

Positions 1–19 (MVVMLRYVWPLLLCSPCLL) are cleaved as a signal peptide. The Extracellular segment spans residues 20–1123 (IQIPDEYKGH…VSTTGSFASE (1104 aa)). Ig-like C2-type domains are found at residues 35 to 130 (PVIT…IQLV), 138 to 225 (PKET…EPID), 239 to 327 (PRLL…YYVT), 332 to 419 (PYWL…AYIY), 424 to 506 (PARI…NNVT), and 517 to 600 (TQIT…DEVE). 2 disulfide bridges follow: cysteine 57-cysteine 113 and cysteine 157-cysteine 208. N-linked (GlcNAc...) asparagine glycans are attached at residues asparagine 100, asparagine 202, asparagine 246, and asparagine 293. Cystine bridges form between cysteine 263/cysteine 311 and cysteine 353/cysteine 403. Residues asparagine 432, asparagine 478, asparagine 489, and asparagine 504 are each glycosylated (N-linked (GlcNAc...) asparagine). Cysteine 447 and cysteine 496 are disulfide-bonded. A disulfide bond links cysteine 538 and cysteine 590. 2 short sequence motifs (cell attachment site) span residues 553–555 (RGD) and 562–564 (RGD). Residues asparagine 587 and asparagine 670 are each glycosylated (N-linked (GlcNAc...) asparagine). Fibronectin type-III domains lie at 613 to 711 (PVPH…TPEA), 716 to 809 (NPVD…SGED), 811 to 916 (PQVS…PEGV), 919 to 1015 (HPEA…MALF), and 1014 to 1112 (LFGK…TGPV). The disordered stretch occupies residues 697 to 724 (GEPSPVSESVVTPEAAPEKNPVDVRGEG). Residues 712–724 (APEKNPVDVRGEG) are compositionally biased toward basic and acidic residues. N-linked (GlcNAc...) asparagine glycosylation is found at asparagine 725, asparagine 776, asparagine 824, asparagine 848, asparagine 875, asparagine 968, asparagine 978, asparagine 1022, asparagine 1030, asparagine 1073, and asparagine 1107. The helical transmembrane segment at 1124-1146 (GWFIAFVSAIILLLLILLILCFI) threads the bilayer. Residues 1147–1260 (KRSKGGKYSV…SPINPAVALE (114 aa)) are Cytoplasmic-facing. Phosphoserine occurs at positions 1166, 1181, 1184, 1197, 1246, 1247, and 1251. Disordered stretches follow at residues 1183–1210 (ESDNEEKAFGSSQPSLNGDIKPLGSDDS) and 1229–1260 (IGQYSGKKEKEAAGGNDSSGATSPINPAVALE). Residues 1244-1253 (NDSSGATSPI) show a composition bias toward polar residues.

The protein belongs to the immunoglobulin superfamily. L1/neurofascin/NgCAM family. As to quaternary structure, interacts with SHTN1; the interaction occurs in axonal growth cones. Interacts with isoform 2 of BSG. Expressed in the brain, including in the molecular layer of the cerebellar cortex, the fiber-rich layers of the hippocampus (alveus, and strata lacunosum moleculare, radiatum, and oriens), the nerve fiber layer and the inner and outer plexiform layers of the retina, and in the molecular layer of the olfactory bulb (at protein level).

The protein resides in the cell membrane. It localises to the cell projection. It is found in the growth cone. In terms of biological role, neural cell adhesion molecule involved in the dynamics of cell adhesion and in the generation of transmembrane signals at tyrosine kinase receptors. During brain development, critical in multiple processes, including neuronal migration, axonal growth and fasciculation, and synaptogenesis. In the mature brain, plays a role in the dynamics of neuronal structure and function, including synaptic plasticity. This is Neural cell adhesion molecule L1 (L1cam) from Mus musculus (Mouse).